The primary structure comprises 125 residues: Acidic phospholipase A2 HTe (125 aa).

7 disulfide bridges follow: Cys11–Cys77, Cys27–Cys124, Cys29–Cys45, Cys44–Cys105, Cys51–Cys98, Cys61–Cys91, and Cys84–Cys96. Residues Tyr28, Gly30, and Gly32 each contribute to the Ca(2+) site. His48 is a catalytic residue. Residue Asp49 coordinates Ca(2+). Asp99 is an active-site residue.

The protein belongs to the phospholipase A2 family. Group I subfamily. D49 sub-subfamily. Requires Ca(2+) as cofactor. No glycosylation was detected on this protein. Expressed by the venom gland.

The protein localises to the secreted. The catalysed reaction is a 1,2-diacyl-sn-glycero-3-phosphocholine + H2O = a 1-acyl-sn-glycero-3-phosphocholine + a fatty acid + H(+). Functionally, snake venom phospholipase A2 (PLA2) that blocks neuromuscular transmission, but that does not produce blockade by virtue of a selective action on nerve endings. Instead, the toxin acts both on nerve and on muscle. PLA2 catalyzes the calcium-dependent hydrolysis of the 2-acyl groups in 3-sn-phosphoglycerides. The protein is Acidic phospholipase A2 HTe of Notechis scutatus scutatus (Mainland tiger snake).